We begin with the raw amino-acid sequence, 462 residues long: Sonic hedgehog protein (462 aa).

Residues 1–23 (MLLLARCLLLVLVSSLLVCSGLA) form the signal peptide. Residue Cys24 is the site of N-palmitoyl cysteine attachment. Positions 32 to 38 (KRRHPKK) match the Cardin-Weintraub motif. Ca(2+)-binding residues include Glu89, Glu90, Asp95, Thr125, Glu126, Asp129, and Asp131. His140, Asp147, and His182 together coordinate Zn(2+). Gly197 carries Cholesterol glycine ester lipidation. An N-linked (GlcNAc...) asparagine glycan is attached at Asn278. 2 disordered regions span residues 279–302 (DSAT…LGPR) and 395–414 (TDRG…GRVA). Low complexity predominate over residues 283–292 (GEPEASSGSG). Residues 400–412 (DSGGGDRGGGGGR) show a composition bias toward gly residues.

The protein belongs to the hedgehog family. In terms of assembly, multimer. As to quaternary structure, interacts with HHATL/GUP1 which negatively regulates HHAT-mediated palmitoylation of the SHH N-terminus. Interacts with BOC and CDON. Interacts with HHIP. Interacts with DISP1 via its cholesterol anchor. Interacts with SCUBE2. Interacts with glypican GPC3. The C-terminal domain displays an autoproteolysis activity and a cholesterol transferase activity. Both activities result in the cleavage of the full-length protein and covalent attachment of a cholesterol moiety to the C-terminal of the newly generated N-terminal fragment (ShhN). Cholesterylation is required for the sonic hedgehog protein N-product targeting to lipid rafts and multimerization. ShhN is the active species in both local and long-range signaling, whereas the C-product (ShhC) is degraded in the endoplasmic reticulum. Post-translationally, N-palmitoylation by HHAT of ShhN is required for sonic hedgehog protein N-product multimerization and full activity. It is a prerequisite for the membrane-proximal positioning and the subsequent shedding of this N-terminal peptide. In terms of processing, the lipidated N- and C-terminal peptides of ShhNp can be cleaved (shedding). The N-terminal palmitoylated peptide is cleaved at the Cardin-Weintraub (CW) motif site. The cleavage reduced the interactions with heparan sulfate. The cleavage is enhanced by SCUBE2.

The protein localises to the endoplasmic reticulum membrane. It localises to the golgi apparatus membrane. Its subcellular location is the secreted. It is found in the cell membrane. It carries out the reaction glycyl-L-cysteinyl-[protein] + cholesterol + H(+) = [protein]-C-terminal glycyl cholesterol ester + N-terminal L-cysteinyl-[protein]. Functionally, the C-terminal part of the sonic hedgehog protein precursor displays an autoproteolysis and a cholesterol transferase activity. Both activities result in the cleavage of the full-length protein into two parts (ShhN and ShhC) followed by the covalent attachment of a cholesterol moiety to the C-terminal of the newly generated ShhN. Both activities occur in the endoplasmic reticulum. Once cleaved, ShhC is degraded in the endoplasmic reticulum. In terms of biological role, the dually lipidated sonic hedgehog protein N-product (ShhNp) is a morphogen which is essential for a variety of patterning events during development. Induces ventral cell fate in the neural tube and somites. Involved in the patterning of the anterior-posterior axis of the developing limb bud. Essential for axon guidance. Binds to the patched (PTCH1) receptor, which functions in association with smoothened (SMO), to activate the transcription of target genes. In the absence of SHH, PTCH1 represses the constitutive signaling activity of SMO. This is Sonic hedgehog protein from Homo sapiens (Human).